Consider the following 189-residue polypeptide: Peptidyl-tRNA hydrolase (189 aa).

Tyrosine 14 contributes to the tRNA binding site. The active-site Proton acceptor is histidine 19. TRNA is bound by residues tyrosine 64, asparagine 66, and asparagine 112.

This sequence belongs to the PTH family. Monomer.

It localises to the cytoplasm. It catalyses the reaction an N-acyl-L-alpha-aminoacyl-tRNA + H2O = an N-acyl-L-amino acid + a tRNA + H(+). Functionally, hydrolyzes ribosome-free peptidyl-tRNAs (with 1 or more amino acids incorporated), which drop off the ribosome during protein synthesis, or as a result of ribosome stalling. Catalyzes the release of premature peptidyl moieties from peptidyl-tRNA molecules trapped in stalled 50S ribosomal subunits, and thus maintains levels of free tRNAs and 50S ribosomes. The protein is Peptidyl-tRNA hydrolase of Clostridium botulinum (strain Langeland / NCTC 10281 / Type F).